Reading from the N-terminus, the 484-residue chain is MENFHAQYVMLETIGHGGCSKVMLARHRLTGSHVAVKMIRKSECWCNPVMSEVELLMMADHPNIISLLQVIETKKKVYLIMELCEGKSLYQHIRNAGYLQEDEARALFKQLLSAMNYCHNQGIVHRDLKPDNIMVEKDGKVKIIDFGLGTQVKPGQKLNLFCGTYPFSAPEVLLSRPYDGPKIDVWTLGVVLYFMVTGKVPFDAASIQKLVRQILAGKYFVPSRLSVELRDLISLLMTANPKLRPTVAEVMVHPWVTEGSGVFPDPCEEQMPLKPNPAIVKAMGYIGFQAQDIEDSLRQRKFNETMASYCLLKKQILKECDRPIRAQPMNPSVTPFPSLVDTSTFHLGLRRRETEPTSLRLSANRQMSVCGRSTSKKRDRRFSWPSVSGRPLHTTHTMDHTHTRTRSVPCIYSMFCTIQPNSSDDSTEGHTSASAEDKPVRSRGWPRGIKGWTRKIGNVMRKLCCCIPSKETSHVGHSRVSPKK.

The 249-residue stretch at 8 to 256 (YVMLETIGHG…VAEVMVHPWV (249 aa)) folds into the Protein kinase domain. ATP is bound by residues 14–22 (IGHGGCSKV) and K37. Residue D127 is the Proton acceptor of the active site. The UBA domain occupies 272–314 (PLKPNPAIVKAMGYIGFQAQDIEDSLRQRKFNETMASYCLLKK). Polar residues-rich tracts occupy residues 356–373 (PTSLRLSANRQMSVCGRS) and 422–434 (SSDDSTEGHTSAS). 2 disordered regions span residues 356–400 (PTSL…TMDH) and 422–450 (SSDDSTEGHTSASAEDKPVRSRGWPRGIK).

It belongs to the protein kinase superfamily. CAMK Ser/Thr protein kinase family. Smok subfamily. Testis-specific. Expressed in the testis from 22 days postpartum (22 dpp).

It catalyses the reaction L-seryl-[protein] + ATP = O-phospho-L-seryl-[protein] + ADP + H(+). The catalysed reaction is L-threonyl-[protein] + ATP = O-phospho-L-threonyl-[protein] + ADP + H(+). Functionally, may play a role in sperm motility, especially in the regulation of flagellar function. In Mus musculus (Mouse), this protein is Sperm motility kinase 2B.